We begin with the raw amino-acid sequence, 2727 residues long: E3 ubiquitin-protein ligase Ufd4 (2727 aa).

Disordered stretches follow at residues 247 to 271 (THSS…TNSD) and 365 to 389 (RGSN…TDRT). A compositionally biased stretch (polar residues) spans 365–374 (RGSNNPNQGQ). 3 ANK repeats span residues 422–451 (VGQT…DVNK), 453–482 (QRSS…YPDL), and 486–518 (DGKT…WMSP). A disordered region spans residues 682-702 (AQRSSTSVVVAPRPTSDDPME). The MIB/HERC2 domain occupies 1322–1392 (QIRAQLKHMT…KYDLKLADCE (71 aa)). 2 stretches are compositionally biased toward polar residues: residues 1401–1430 (QSMG…STPS) and 1437–1448 (KNQNPEGASNQT). Disordered regions lie at residues 1401–1448 (QSMG…SNQT), 1483–1512 (NTSS…GPSP), 1570–1592 (ESVT…REND), 1845–1871 (YPSL…QQSA), 1905–1930 (ALLG…DEYE), and 2092–2115 (STCL…ASTL). Residues 1575–1592 (SQSSSHPDVQSSSPREND) are compositionally biased toward low complexity. The span at 1909–1930 (DLDDEDDMDEDNDEEENEDEYE) shows a compositional bias: acidic residues. The span at 2104-2115 (PDVSSKSGASTL) shows a compositional bias: polar residues. Residues 2289-2727 (RKSVLEVEFL…ATKEKGFHLN (439 aa)) form the HECT domain. Catalysis depends on C2696, which acts as the Glycyl thioester intermediate.

It belongs to the UPL family. K-HECT subfamily.

It carries out the reaction S-ubiquitinyl-[E2 ubiquitin-conjugating enzyme]-L-cysteine + [acceptor protein]-L-lysine = [E2 ubiquitin-conjugating enzyme]-L-cysteine + N(6)-ubiquitinyl-[acceptor protein]-L-lysine.. The protein operates within protein modification; protein ubiquitination. Its function is as follows. E3 ubiquitin-protein ligase which accepts ubiquitin from an E2 ubiquitin-conjugating enzyme in the form of a thioester and then directly transfers the ubiquitin to targeted substrates. Involved in the negative regulation of the Ras/MAPK signaling pathway in the wing by acting with the E2 enzyme Unc6 and the putative E3 ligases poe and Kcmf1 to mediate the ubiquitination and proteasomal degradation of rl/MAPK. This is E3 ubiquitin-protein ligase Ufd4 from Drosophila melanogaster (Fruit fly).